We begin with the raw amino-acid sequence, 1196 residues long: DNA-directed RNA polymerase subunit beta (1196 aa).

Belongs to the RNA polymerase beta chain family. As to quaternary structure, the RNAP catalytic core consists of 2 alpha, 1 beta, 1 beta' and 1 omega subunit. When a sigma factor is associated with the core the holoenzyme is formed, which can initiate transcription.

The enzyme catalyses RNA(n) + a ribonucleoside 5'-triphosphate = RNA(n+1) + diphosphate. DNA-dependent RNA polymerase catalyzes the transcription of DNA into RNA using the four ribonucleoside triphosphates as substrates. The protein is DNA-directed RNA polymerase subunit beta of Lactococcus lactis subsp. lactis (strain IL1403) (Streptococcus lactis).